The sequence spans 302 residues: Sulfate adenylyltransferase subunit 2 (302 aa).

The tract at residues 280-302 (RQGRLIDSDQSASMEQKKRQGYF) is disordered.

Belongs to the PAPS reductase family. CysD subfamily. In terms of assembly, heterodimer composed of CysD, the smaller subunit, and CysN.

It carries out the reaction sulfate + ATP + H(+) = adenosine 5'-phosphosulfate + diphosphate. Its pathway is sulfur metabolism; hydrogen sulfide biosynthesis; sulfite from sulfate: step 1/3. Functionally, with CysN forms the ATP sulfurylase (ATPS) that catalyzes the adenylation of sulfate producing adenosine 5'-phosphosulfate (APS) and diphosphate, the first enzymatic step in sulfur assimilation pathway. APS synthesis involves the formation of a high-energy phosphoric-sulfuric acid anhydride bond driven by GTP hydrolysis by CysN coupled to ATP hydrolysis by CysD. This chain is Sulfate adenylyltransferase subunit 2, found in Shewanella sp. (strain ANA-3).